The chain runs to 232 residues: Phospholipase A2 hemilipin (232 aa).

Positions 1-18 (MTFLILTILATVTPSLYS) are cleaved as a signal peptide. The propeptide occupies 19-105 (HVVQRELRVN…QRCSGSAEGR (87 aa)). Positions 115, 117, and 119 each coordinate Ca(2+). 5 disulfides stabilise this stretch: Cys116–Cys137, Cys136–Cys175, Cys143–Cys168, Cys166–Cys206, and Cys211–Cys219. An N-linked (GlcNAc...) asparagine glycan is attached at Asn124. His140 is a catalytic residue. Position 141 (Asp141) interacts with Ca(2+). Asn157 is a glycosylation site (N-linked (GlcNAc...) asparagine). A propeptide spanning residues 214-217 (KRDA) is cleaved from the precursor.

Belongs to the phospholipase A2 family. Group III subfamily. In terms of assembly, heterodimer composed of a small subunit and a large subunit; disulfid-linked. The cofactor is Ca(2+). In terms of tissue distribution, expressed by the venom gland.

Its subcellular location is the secreted. The catalysed reaction is a 1,2-diacyl-sn-glycero-3-phosphocholine + H2O = a 1-acyl-sn-glycero-3-phosphocholine + a fatty acid + H(+). In terms of biological role, scorpion venom phospholipase A2 (PLA2) that shows high hydrolytic activities towards lecithin and acts as an effective blocker of all angiogenesis key steps in vivo and in vitro. It has no effect on apoptosis and does not display hemolytic, inflammatory or neurotoxic effects. PLA2 catalyzes the calcium-dependent hydrolysis of the 2-acyl groups in 3-sn-phosphoglycerides. This chain is Phospholipase A2 hemilipin, found in Hemiscorpius lepturus (Scorpion).